The following is a 127-amino-acid chain: Riboflavin kinase (127 aa).

10 to 15 is a CDP binding site; the sequence is GLGEGK. Mg(2+) is bound by residues threonine 39 and asparagine 41. Residues threonine 96 and glutamate 104 each contribute to the FMN site. 109-112 is a CDP binding site; the sequence is IQLR.

Belongs to the archaeal riboflavin kinase family. Mg(2+) is required as a cofactor.

It carries out the reaction riboflavin + CTP = CDP + FMN + H(+). The protein operates within cofactor biosynthesis; FMN biosynthesis; FMN from riboflavin (CTP route): step 1/1. Functionally, catalyzes the CTP-dependent phosphorylation of riboflavin (vitamin B2) to form flavin mononucleotide (FMN). The polypeptide is Riboflavin kinase (Methanococcus maripaludis (strain DSM 14266 / JCM 13030 / NBRC 101832 / S2 / LL)).